We begin with the raw amino-acid sequence, 328 residues long: Phenylalanine--tRNA ligase alpha subunit (328 aa).

Glu245 contributes to the Mg(2+) binding site.

The protein belongs to the class-II aminoacyl-tRNA synthetase family. Phe-tRNA synthetase alpha subunit type 1 subfamily. As to quaternary structure, tetramer of two alpha and two beta subunits. Requires Mg(2+) as cofactor.

It is found in the cytoplasm. The enzyme catalyses tRNA(Phe) + L-phenylalanine + ATP = L-phenylalanyl-tRNA(Phe) + AMP + diphosphate + H(+). This is Phenylalanine--tRNA ligase alpha subunit from Helicobacter acinonychis (strain Sheeba).